Consider the following 488-residue polypeptide: Glycogen synthase (488 aa).

Position 17 (K17) interacts with ADP-alpha-D-glucose.

It belongs to the glycosyltransferase 1 family. Bacterial/plant glycogen synthase subfamily.

It carries out the reaction [(1-&gt;4)-alpha-D-glucosyl](n) + ADP-alpha-D-glucose = [(1-&gt;4)-alpha-D-glucosyl](n+1) + ADP + H(+). The protein operates within glycan biosynthesis; glycogen biosynthesis. Synthesizes alpha-1,4-glucan chains using ADP-glucose. The polypeptide is Glycogen synthase (Nitratidesulfovibrio vulgaris (strain DSM 19637 / Miyazaki F) (Desulfovibrio vulgaris)).